The primary structure comprises 103 residues: Insulin (103 aa).

An N-terminal signal peptide occupies residues 1–20; that stretch reads IQSLPLLALLALSGPGTSHA. 3 disulfide bridges follow: cysteine 27–cysteine 89, cysteine 39–cysteine 102, and cysteine 88–cysteine 93. A propeptide spans 53 to 80 (c peptide); sequence DAEHPLVNGPLHGEVGDLPFQQEEFEKV.

This sequence belongs to the insulin family. In terms of assembly, heterodimer of a B chain and an A chain linked by two disulfide bonds.

The protein localises to the secreted. In terms of biological role, insulin decreases blood glucose concentration. It increases cell permeability to monosaccharides, amino acids and fatty acids. It accelerates glycolysis, the pentose phosphate cycle, and glycogen synthesis in liver. This Selasphorus rufus (Rufous hummingbird) protein is Insulin (INS).